The sequence spans 1057 residues: Diacylglycerol kinase iota (1057 aa).

Positions 15 to 59 (AARGPARAPAAAAAAAASPPGPCSGAACAPSAAAGAGAMNPSSSA) are enriched in low complexity. Disordered regions lie at residues 15–74 (AARG…SSGS) and 334–358 (LKAS…MEQE). Over residues 337–352 (SNRKKKRTSFKRKASK) the composition is skewed to basic residues. Residues 372–507 (PLMKPLLVFV…DRWNLHVERN (136 aa)) form the DAGKc domain. 2 ANK repeats span residues 950–979 (DHCS…SELL) and 986–1015 (TGET…SLRK). A compositionally biased stretch (basic and acidic residues) spans 1014–1024 (RKTDSKGKTPQ). The tract at residues 1014-1033 (RKTDSKGKTPQERAQQAGDP) is disordered. The short motif at 1055–1057 (TAV) is the PDZ-binding element.

Belongs to the eukaryotic diacylglycerol kinase family. As to quaternary structure, interacts (via PDZ-binding motif) with DLG4; controls the localization of DGKI to the synapse. Interacts (via PDZ-binding motif) with DLG1. Interacts (via PDZ-binding motif) with DLG2. Interacts (via PDZ-binding motif) with DLG3. May interact with RASGRP3; involved in the regulation of RASGRP3 activity. Specifically expressed in brain and retina. In brain, highly expressed in hippocampus, caudate nucleus, occipital pole, cerebral cortex, and cerebellum. Also detected in kidney.

Its subcellular location is the cell projection. The protein localises to the axon. It localises to the dendrite. The protein resides in the presynapse. It is found in the postsynapse. Its subcellular location is the postsynaptic density. The protein localises to the synaptic cell membrane. It localises to the cytoplasmic vesicle. The protein resides in the secretory vesicle. It is found in the synaptic vesicle membrane. Its subcellular location is the cytoplasm. The protein localises to the cytosol. It localises to the nucleus. It catalyses the reaction a 1,2-diacyl-sn-glycerol + ATP = a 1,2-diacyl-sn-glycero-3-phosphate + ADP + H(+). It carries out the reaction 1,2-di-(9Z-octadecenoyl)-sn-glycerol + ATP = 1,2-di-(9Z-octadecenoyl)-sn-glycero-3-phosphate + ADP + H(+). The enzyme catalyses 1-octadecanoyl-2-(5Z,8Z,11Z,14Z-eicosatetraenoyl)-sn-glycerol + ATP = 1-octadecanoyl-2-(5Z,8Z,11Z,14Z-eicosatetraenoyl)-sn-glycero-3-phosphate + ADP + H(+). The catalysed reaction is 1-octadecanoyl-2-(9Z,12Z)-octadecadienoyl-sn-glycerol + ATP = 1-octadecanoyl-2-(9Z,12Z-octadecadienoyl)-sn-glycero-3-phosphate + ADP + H(+). It participates in lipid metabolism; glycerolipid metabolism. In terms of biological role, diacylglycerol kinase that converts diacylglycerol/DAG into phosphatidic acid/phosphatidate/PA and regulates the respective levels of these two bioactive lipids. Thereby, acts as a central switch between the signaling pathways activated by these second messengers with different cellular targets and opposite effects in numerous biological processes. Has probably no preference for any of the diacylglycerols in terms of the acyl chain composition, especially for the acyl chain at the sn-2 position. By controlling the diacylglycerol/DAG-mediated activation of RASGRP3, negatively regulates the Rap1 signaling pathway. May play a role in presynaptic diacylglycerol/DAG signaling and control neurotransmitter release during metabotropic glutamate receptor-dependent long-term depression. The protein is Diacylglycerol kinase iota of Homo sapiens (Human).